We begin with the raw amino-acid sequence, 554 residues long: Raftlin (554 aa).

The N-myristoyl glycine moiety is linked to residue Gly-2. Residue Cys-3 is the site of S-palmitoyl cysteine attachment. 2 positions are modified to phosphoserine: Ser-183 and Ser-199. 3 disordered regions span residues 192-249 (CTLG…NEAG), 441-488 (KKRE…DQFS), and 504-554 (GRAS…TEAN). 2 stretches are compositionally biased toward basic and acidic residues: residues 198 to 209 (SSLENDTPKAAE) and 475 to 487 (QAEENEKNLEDQF). Phosphoserine is present on residues Ser-507 and Ser-530. Residues 526-542 (HNRDSVALRHSNPRAEA) are compositionally biased toward basic and acidic residues.

This sequence belongs to the raftlin family. As to quaternary structure, interacts with TLR4; the interaction occurs in response to lipopolysaccharide stimulation. Interacts with CLTC; the interaction occurs in response to pathogens. Interacts with AP2A1 and AP2B1. Expressed in T-cells, B-cells, thymus and spleen (at protein level). Expressed in dendritic cells, macrophages, heart, lung and small intestine.

Its subcellular location is the cell membrane. It is found in the cytoplasm. The protein resides in the membrane raft. The protein localises to the endosome. It localises to the early endosome. In terms of biological role, involved in protein trafficking via association with clathrin and AP2 complex. Upon bacterial lipopolysaccharide stimulation, mediates internalization of TLR4 to endosomes in dendritic cells and macrophages, and internalization of poly(I:C) to TLR3-positive endosomes in myeloid dendritic cells and epithelial cells; resulting in activation of TICAM1-mediated signaling and subsequent IFNB1 production. Involved in T-cell antigen receptor-mediated signaling by regulating tyrosine kinase LCK localization, T-cell dependent antibody production and cytokine secretion. May regulate B-cell antigen receptor-mediated signaling. May play a pivotal role in the formation and/or maintenance of lipid rafts. In Mus musculus (Mouse), this protein is Raftlin (Rftn1).